We begin with the raw amino-acid sequence, 411 residues long: Putative odorant receptor 59c (411 aa).

The Cytoplasmic portion of the chain corresponds to 1–46; the sequence is MTKFFFKRLQTAPLDQEVSSLDASDYYYRIAFFLGWTPPKGALLRW. The chain crosses the membrane as a helical span at residues 47–67; the sequence is IYSLWTLTTMWLGIVYLPLGL. Topologically, residues 68–86 are extracellular; the sequence is SLTYVKHFDRFTPTEFLTS. Residues 87–107 form a helical membrane-spanning segment; that stretch reads LQVDINCIGNVIKSCVTYSQM. Over 108–139 the chain is Cytoplasmic; it reads WRFRRMNELISSLDKRCVTTTQRRIFHKMVAR. A helical membrane pass occupies residues 140 to 160; that stretch reads VNLIVILFLSTYLGFCFLTLF. At 161-185 the chain is on the extracellular side; sequence TSVFAGKAPWQLYNPLVDWRKGHWQ. The helical transmembrane segment at 186-206 threads the bilayer; that stretch reads LWIASILEYCVVSIGTMQELM. The Cytoplasmic segment spans residues 207–271; that stretch reads SDTYAIVFIS…QIIRPILSIT (65 aa). A helical membrane pass occupies residues 272-292; sequence IFAQFMLVGIDLGLAAISILF. Residues 293–296 are Extracellular-facing; sequence FPNT. A helical transmembrane segment spans residues 297–317; that stretch reads IWTIMANVSFIVAICTESFPC. Residues 318-369 are Cytoplasmic-facing; sequence CMLCEHLIEDSVHVSNALFHSNWITADRSYKSAVLYFLHRAQQPIQFTAGSI. A helical transmembrane segment spans residues 370–390; it reads FPISVQSNIAVAKFAFTIITI. Residues 391–411 lie on the Extracellular side of the membrane; that stretch reads VNQMNLGEKFFSDRSNGDINP.

It belongs to the insect chemoreceptor superfamily. Heteromeric odorant receptor channel (TC 1.A.69) family. Or2a subfamily. As to quaternary structure, interacts with Orco. Complexes exist early in the endomembrane system in olfactory sensory neurons (OSNs), coupling these complexes to the conserved ciliary trafficking pathway. As to expression, expressed in olfactory sensory neurons in the maxillary palp.

It is found in the cell membrane. Odorant receptor which mediates acceptance or avoidance behavior, depending on its substrates. The odorant receptor repertoire encodes a large collection of odor stimuli that vary widely in identity, intensity, and duration. May form a complex with Orco to form odorant-sensing units, providing sensitive and prolonged odorant signaling and calcium permeability. The chain is Putative odorant receptor 59c (Or59c) from Drosophila melanogaster (Fruit fly).